The chain runs to 1041 residues: Isoleucine--tRNA ligase (1041 aa).

A 'HIGH' region motif is present at residues Pro53 to His63. A 'KMSKS' region motif is present at residues Lys619–Ser623. Lys622 lines the ATP pocket.

Belongs to the class-I aminoacyl-tRNA synthetase family. IleS type 2 subfamily. As to quaternary structure, monomer. Requires Zn(2+) as cofactor.

Its subcellular location is the cytoplasm. The enzyme catalyses tRNA(Ile) + L-isoleucine + ATP = L-isoleucyl-tRNA(Ile) + AMP + diphosphate. Functionally, catalyzes the attachment of isoleucine to tRNA(Ile). As IleRS can inadvertently accommodate and process structurally similar amino acids such as valine, to avoid such errors it has two additional distinct tRNA(Ile)-dependent editing activities. One activity is designated as 'pretransfer' editing and involves the hydrolysis of activated Val-AMP. The other activity is designated 'posttransfer' editing and involves deacylation of mischarged Val-tRNA(Ile). This chain is Isoleucine--tRNA ligase (ileS), found in Mycobacterium tuberculosis (strain CDC 1551 / Oshkosh).